We begin with the raw amino-acid sequence, 407 residues long: [Pyruvate dehydrogenase (acetyl-transferring)] kinase isozyme 2, mitochondrial (407 aa).

The Histidine kinase domain occupies 135–364 (LEYKDTYGDD…DAVIYLKALS (230 aa)). 2 positions are modified to phosphotyrosine: Tyr-215 and Tyr-216. Residues 251–258 (ELFKNAMR), Asp-290, 309–310 (ST), and 325–330 (GFGYGL) contribute to the ATP site. Lys-376 carries the post-translational modification N6-succinyllysine.

This sequence belongs to the PDK/BCKDK protein kinase family. In terms of assembly, homodimer, and heterodimer with PDK1. Interacts with the pyruvate dehydrogenase complex subunit DLAT, and is part of the multimeric pyruvate dehydrogenase complex that contains multiple copies of pyruvate dehydrogenase (E1), dihydrolipoamide acetyltransferase (DLAT, E2) and lipoamide dehydrogenase (DLD, E3). Expressed in many tissues, with the highest level in heart and skeletal muscle, intermediate levels in brain, kidney, pancreas and liver, and low levels in placenta and lung.

It is found in the mitochondrion matrix. It catalyses the reaction L-seryl-[pyruvate dehydrogenase E1 alpha subunit] + ATP = O-phospho-L-seryl-[pyruvate dehydrogenase E1 alpha subunit] + ADP + H(+). Its activity is regulated as follows. Activity is enhanced by binding to the pyruvate dehydrogenase subunit DLAT. Inhibited by ADP and pyruvate; these compounds interfere with DLAT binding and thereby inhibit kinase activity. Inhibited by dichloroacetate. Inhibited by AZD7545; this compound interferes with DLAT binding and thereby inhibits kinase activity. Kinase that plays a key role in the regulation of glucose and fatty acid metabolism and homeostasis via phosphorylation of the pyruvate dehydrogenase subunits PDHA1 and PDHA2. This inhibits pyruvate dehydrogenase activity, and thereby regulates metabolite flux through the tricarboxylic acid cycle, down-regulates aerobic respiration and inhibits the formation of acetyl-coenzyme A from pyruvate. Inhibition of pyruvate dehydrogenase decreases glucose utilization and increases fat metabolism. Mediates cellular responses to insulin. Plays an important role in maintaining normal blood glucose levels and in metabolic adaptation to nutrient availability. Via its regulation of pyruvate dehydrogenase activity, plays an important role in maintaining normal blood pH and in preventing the accumulation of ketone bodies under starvation. Plays a role in the regulation of cell proliferation and in resistance to apoptosis under oxidative stress. Plays a role in p53/TP53-mediated apoptosis. The sequence is that of [Pyruvate dehydrogenase (acetyl-transferring)] kinase isozyme 2, mitochondrial (PDK2) from Homo sapiens (Human).